A 184-amino-acid polypeptide reads, in one-letter code: Ribosome-recycling factor (184 aa).

A disordered region spans residues 141–165; the sequence is DEKNGDITEDDLRSQTDDVQKATDN.

It belongs to the RRF family.

It is found in the cytoplasm. In terms of biological role, responsible for the release of ribosomes from messenger RNA at the termination of protein biosynthesis. May increase the efficiency of translation by recycling ribosomes from one round of translation to another. This Staphylococcus epidermidis (strain ATCC 35984 / DSM 28319 / BCRC 17069 / CCUG 31568 / BM 3577 / RP62A) protein is Ribosome-recycling factor.